Reading from the N-terminus, the 157-residue chain is Phosphopantetheine adenylyltransferase (157 aa).

Ser-9 provides a ligand contact to substrate. Residues Ser-9–Phe-10 and His-17 contribute to the ATP site. Substrate-binding residues include Lys-41, Leu-74, and Lys-88. Residues Gly-89 to Arg-91, Glu-99, and Tyr-123 to Ser-129 contribute to the ATP site.

This sequence belongs to the bacterial CoaD family. As to quaternary structure, homohexamer. Mg(2+) serves as cofactor.

Its subcellular location is the cytoplasm. It carries out the reaction (R)-4'-phosphopantetheine + ATP + H(+) = 3'-dephospho-CoA + diphosphate. It participates in cofactor biosynthesis; coenzyme A biosynthesis; CoA from (R)-pantothenate: step 4/5. Its function is as follows. Reversibly transfers an adenylyl group from ATP to 4'-phosphopantetheine, yielding dephospho-CoA (dPCoA) and pyrophosphate. This Micrococcus luteus (strain ATCC 4698 / DSM 20030 / JCM 1464 / CCM 169 / CCUG 5858 / IAM 1056 / NBRC 3333 / NCIMB 9278 / NCTC 2665 / VKM Ac-2230) (Micrococcus lysodeikticus) protein is Phosphopantetheine adenylyltransferase.